We begin with the raw amino-acid sequence, 453 residues long: Ribulose bisphosphate carboxylase large chain (453 aa).

Positions 1-2 are excised as a propeptide; sequence MS. Residue P3 is modified to N-acetylproline. The residue at position 14 (K14) is an N6,N6,N6-trimethyllysine. Substrate is bound by residues N123 and T173. The Proton acceptor role is filled by K175. Residue K177 participates in substrate binding. K201, D203, and E204 together coordinate Mg(2+). K201 is subject to N6-carboxylysine. Catalysis depends on H294, which acts as the Proton acceptor. 3 residues coordinate substrate: R295, H327, and S379.

This sequence belongs to the RuBisCO large chain family. Type I subfamily. Heterohexadecamer of 8 large chains and 8 small chains; disulfide-linked. The disulfide link is formed within the large subunit homodimers. The cofactor is Mg(2+). In terms of processing, the disulfide bond which can form in the large chain dimeric partners within the hexadecamer appears to be associated with oxidative stress and protein turnover.

The protein resides in the plastid. It is found in the chloroplast. It catalyses the reaction 2 (2R)-3-phosphoglycerate + 2 H(+) = D-ribulose 1,5-bisphosphate + CO2 + H2O. The enzyme catalyses D-ribulose 1,5-bisphosphate + O2 = 2-phosphoglycolate + (2R)-3-phosphoglycerate + 2 H(+). In terms of biological role, ruBisCO catalyzes two reactions: the carboxylation of D-ribulose 1,5-bisphosphate, the primary event in carbon dioxide fixation, as well as the oxidative fragmentation of the pentose substrate in the photorespiration process. Both reactions occur simultaneously and in competition at the same active site. The protein is Ribulose bisphosphate carboxylase large chain of Cruciata glabra (Slender crosswort).